The chain runs to 671 residues: DNA ligase (671 aa).

Residues 32–36, 81–82, and glutamate 113 contribute to the NAD(+) site; these read DAEYD and SL. The active-site N6-AMP-lysine intermediate is lysine 115. NAD(+) is bound by residues arginine 136, glutamate 173, lysine 290, and lysine 314. Residues cysteine 408, cysteine 411, cysteine 426, and cysteine 432 each contribute to the Zn(2+) site. The region spanning 593–671 is the BRCT domain; that stretch reads EIDSPFAGKT…EAEMIRLLGA (79 aa).

The protein belongs to the NAD-dependent DNA ligase family. LigA subfamily. Mg(2+) is required as a cofactor. The cofactor is Mn(2+).

The catalysed reaction is NAD(+) + (deoxyribonucleotide)n-3'-hydroxyl + 5'-phospho-(deoxyribonucleotide)m = (deoxyribonucleotide)n+m + AMP + beta-nicotinamide D-nucleotide.. In terms of biological role, DNA ligase that catalyzes the formation of phosphodiester linkages between 5'-phosphoryl and 3'-hydroxyl groups in double-stranded DNA using NAD as a coenzyme and as the energy source for the reaction. It is essential for DNA replication and repair of damaged DNA. This chain is DNA ligase, found in Salmonella newport (strain SL254).